The chain runs to 498 residues: ATP synthase subunit beta, chloroplastic (498 aa).

G172–T179 lines the ATP pocket.

This sequence belongs to the ATPase alpha/beta chains family. F-type ATPases have 2 components, CF(1) - the catalytic core - and CF(0) - the membrane proton channel. CF(1) has five subunits: alpha(3), beta(3), gamma(1), delta(1), epsilon(1). CF(0) has four main subunits: a(1), b(1), b'(1) and c(9-12).

Its subcellular location is the plastid. It localises to the chloroplast thylakoid membrane. The catalysed reaction is ATP + H2O + 4 H(+)(in) = ADP + phosphate + 5 H(+)(out). In terms of biological role, produces ATP from ADP in the presence of a proton gradient across the membrane. The catalytic sites are hosted primarily by the beta subunits. The chain is ATP synthase subunit beta, chloroplastic from Sorghum bicolor (Sorghum).